The following is a 383-amino-acid chain: NIPA-like protein 2 (383 aa).

N-linked (GlcNAc...) asparagine glycosylation is found at Asn23 and Asn33. 9 helical membrane passes run 46–66, 88–108, 115–135, 144–164, 177–197, 208–228, 243–263, 278–298, and 306–326; these read IHLF…ISLN, VLWL…FAAY, LIAP…VLFL, LLGM…APNI, FVGW…CILL, IVVL…SVKA, LTYA…VFQV, VVPV…IIFY, and FLTV…VFLV. Residues 352 to 383 are disordered; that stretch reads DKVQPDSNGLSYGTLPDGGDSTRGQCGEKKES.

It belongs to the NIPA family.

It localises to the membrane. This Mus musculus (Mouse) protein is NIPA-like protein 2 (Nipal2).